The sequence spans 510 residues: Ninja-family protein mc410 (510 aa).

Disordered stretches follow at residues 1–179, 323–414, and 481–510; these read MDEN…RQIL, HPSH…PSEF, and RHAS…SAQS. Basic and acidic residues-rich tracts occupy residues 31-44 and 103-146; these read SKVE…KVIN and RPVE…DKTR. A compositionally biased stretch (polar residues) spans 148–160; sequence SHISITTDEGSTA. 2 stretches are compositionally biased toward basic and acidic residues: residues 363–389 and 397–406; these read RAME…EENV and RAKDPPDQPR. Residues 485–496 are compositionally biased toward polar residues; it reads VEQTSQEPGTGV. The segment covering 497-510 has biased composition (low complexity); the sequence is SSFPSSNPAASAQS.

This sequence belongs to the Ninja family.

The protein localises to the nucleus. The protein is Ninja-family protein mc410 (MC410) of Nicotiana tabacum (Common tobacco).